The sequence spans 553 residues: MAAPAAGPVFWRRLLGLLPGRPGLAALLGRLSDRLGRSRERRRRRSPWLLLAPLLSPTVPQVTSPPCCLCPEGVHRFQWIRNLVPEFGVSSSHVRVLSSPAEFFELMKGQIKIAKRRVVMASLYLGTGPLEQELVDCLESSLEKSLQAKFPSDLKVSILLDFTRGSRGRKNSRTMLLPLLQRFPERVRVSLFHTPNLRGLLRLLIPERFNETIGLQHIKVYLFDNNVILSGANLSDSYFTNRQDRYVFLQDCAEIADFFTELVDAVGDVSLQLQGDDTVEVVDGMVHPYKGDRAAYCRAANKRVMDVIHSARARQQMLHAQTFHSDSLLSQEEAAAAGDRRPAPDTWIYPLIQMKPFEIQIDEIVTETLLTEAERGAKVFLTTGYFNLTQAYMDLVLGTRAEYQILLASPEVNGFFGAKGVAGAIPAAYVHIERQFYSEVCSLGQQDRVQLQEYWRRGWTFHAKGLWLYLAGSSLPCLTLIGSPNFGYRSVHRDLEAQIAIVTESRSLQQQLHQEQEQLYLRSGVVTSATFEQPGRQVKLWVKMVTPLIKNFF.

The N-terminal 25 residues, 1–25 (MAAPAAGPVFWRRLLGLLPGRPGLA), are a transit peptide targeting the mitochondrion. Ser-46 bears the Phosphoserine mark. An ATP-binding site is contributed by 121 to 128 (ASLYLGTG). PLD phosphodiesterase domains follow at residues 212–238 (TIGLQHIKVYLFDNNVILSGANLSDSY) and 457–490 (RGWTFHAKGLWLYLAGSSLPCLTLIGSPNFGYRS). Active-site residues include His-217, Lys-219, and Asp-224.

Belongs to the CDP-alcohol phosphatidyltransferase class-II family. In terms of tissue distribution, widely expressed with higher expression in testis, liver and brain.

Its subcellular location is the mitochondrion. It catalyses the reaction a CDP-1,2-diacyl-sn-glycerol + sn-glycerol 3-phosphate = a 1,2-diacyl-sn-glycero-3-phospho-(1'-sn-glycero-3'-phosphate) + CMP + H(+). The protein operates within phospholipid metabolism; phosphatidylglycerol biosynthesis; phosphatidylglycerol from CDP-diacylglycerol: step 1/2. Activated by calcium and magnesium and inhibited by other bivalent cations. Its function is as follows. Functions in the biosynthesis of the anionic phospholipids phosphatidylglycerol and cardiolipin. In Mus musculus (Mouse), this protein is CDP-diacylglycerol--glycerol-3-phosphate 3-phosphatidyltransferase, mitochondrial (Pgs1).